The chain runs to 577 residues: Phosphoethanolamine transferase EptC (577 aa).

5 consecutive transmembrane segments (helical) span residues 17 to 37 (LGWA…IIYI), 44 to 64 (NGIR…FLFP), 69 to 89 (IIAA…LCYY), 119 to 139 (YFSL…VLLW), and 154 to 174 (VVSF…NTFI).

Belongs to the phosphoethanolamine transferase family. EptC/CptA subfamily. As to quaternary structure, forms a complex with an unidentified protein of approximately 36 kDa.

The protein localises to the cell inner membrane. It participates in bacterial outer membrane biogenesis; LPS core biosynthesis. Its function is as follows. Catalyzes the addition of a phosphoethanolamine moiety to the outer membrane lipopolysaccharide core. The protein is Phosphoethanolamine transferase EptC (eptC) of Escherichia coli (strain K12).